Reading from the N-terminus, the 1845-residue chain is Helicase swr-1 (1845 aa).

The span at 1–13 (MTTMMTDSGTASD) shows a compositional bias: polar residues. Residues 1–329 (MTTMMTDSGT…GASRATPRIK (329 aa)) form a disordered region. Low complexity predominate over residues 24 to 38 (NDTTTTTTTTTTPGD). A compositionally biased stretch (polar residues) spans 63–84 (SKSYSSTHHVPAIDNTSTTNAN). Positions 98–108 (SPLSSISSPLS) are enriched in low complexity. Over residues 168–180 (PKPESPPWKKFEA) the composition is skewed to basic and acidic residues. Over residues 216–243 (AIQTSPVSNKSSASTSRKPAPASSSNSK) the composition is skewed to polar residues. Pro residues-rich tracts occupy residues 248-258 (KMPPPPPPPKA) and 283-292 (PRRPATPPKP). Positions 418-493 (PEAEEEPPRQ…EMEASKAKWR (76 aa)) constitute an HSA domain. Disordered regions lie at residues 539 to 713 (QKLQ…LFFG) and 749 to 935 (ELQV…TVKT). The segment covering 549 to 565 (DGDEITDEDEDEDDEDL) has biased composition (acidic residues). A compositionally biased stretch (basic and acidic residues) spans 574 to 585 (GDEKESDEHSDQ). Composition is skewed to acidic residues over residues 586–608 (GSDE…SSED) and 663–704 (NDDD…DDEP). Polar residues-rich tracts occupy residues 762-777 (TNGT…SQTE) and 815-834 (TNDS…NQTL). Positions 888–897 (SQSQTQSPKT) are enriched in low complexity. Over residues 898-909 (TDTKPTDVDTPH) the composition is skewed to basic and acidic residues. Over residues 922 to 933 (RQSSPQPTTPTV) the composition is skewed to polar residues. The region spanning 957-1122 (AGLYANNTNG…WSLLYFLAPP (166 aa)) is the Helicase ATP-binding domain. 970 to 977 (DEMGLGKT) is an ATP binding site. The short motif at 1073–1076 (DEAH) is the DEAH box element. Positions 1510 to 1660 (ALDKLLRKLQ…DVVIQEGEFT (151 aa)) constitute a Helicase C-terminal domain. Disordered stretches follow at residues 1702–1724 (TTGA…PPVR), 1751–1783 (QDEA…GGEE), and 1816–1845 (LEGT…SRKR). Residues 1704 to 1718 (GAGGYDGTADGGGGA) are compositionally biased toward gly residues. Low complexity predominate over residues 1769 to 1781 (DGLADLDGQLLGG). Positions 1826 to 1845 (DRKKGRDRNRNRKGKDSRKR) are enriched in basic residues.

Belongs to the SNF2/RAD54 helicase family. SWR1 subfamily. Component of the SWR1 chromatin-remodeling complex.

The protein resides in the nucleus. It catalyses the reaction ATP + H2O = ADP + phosphate + H(+). Functionally, catalytic component of the SWR1 complex which mediates the ATP-dependent exchange of histone H2A for the H2A variant H2A.Z leading to transcriptional regulation of selected genes by chromatin remodeling. This chain is Helicase swr-1 (crf1-1), found in Neurospora crassa (strain ATCC 24698 / 74-OR23-1A / CBS 708.71 / DSM 1257 / FGSC 987).